The following is a 220-amino-acid chain: Glycerol-3-phosphate acyltransferase (220 aa).

The next 6 helical transmembrane spans lie at 11-31 (INVI…GYAL), 70-90 (LLIL…SKLF), 96-116 (LQWM…FLNF), 127-147 (GSVV…WFFV), 153-173 (ISSL…FFVP), and 193-213 (MVLI…NLLA).

It belongs to the PlsY family. In terms of assembly, probably interacts with PlsX.

It is found in the cell inner membrane. It carries out the reaction an acyl phosphate + sn-glycerol 3-phosphate = a 1-acyl-sn-glycero-3-phosphate + phosphate. Its pathway is lipid metabolism; phospholipid metabolism. In terms of biological role, catalyzes the transfer of an acyl group from acyl-phosphate (acyl-PO(4)) to glycerol-3-phosphate (G3P) to form lysophosphatidic acid (LPA). This enzyme utilizes acyl-phosphate as fatty acyl donor, but not acyl-CoA or acyl-ACP. The polypeptide is Glycerol-3-phosphate acyltransferase (Helicobacter acinonychis (strain Sheeba)).